The primary structure comprises 416 residues: UDP-N-acetylglucosamine 1-carboxyvinyltransferase (416 aa).

22 to 23 is a phosphoenolpyruvate binding site; the sequence is KN. R92 serves as a coordination point for UDP-N-acetyl-alpha-D-glucosamine. C116 acts as the Proton donor in catalysis. Residue C116 is modified to 2-(S-cysteinyl)pyruvic acid O-phosphothioketal. Residues 121 to 125, D304, and I326 each bind UDP-N-acetyl-alpha-D-glucosamine; that span reads RPIDQ.

The protein belongs to the EPSP synthase family. MurA subfamily.

Its subcellular location is the cytoplasm. The catalysed reaction is phosphoenolpyruvate + UDP-N-acetyl-alpha-D-glucosamine = UDP-N-acetyl-3-O-(1-carboxyvinyl)-alpha-D-glucosamine + phosphate. It functions in the pathway cell wall biogenesis; peptidoglycan biosynthesis. Its function is as follows. Cell wall formation. Adds enolpyruvyl to UDP-N-acetylglucosamine. The protein is UDP-N-acetylglucosamine 1-carboxyvinyltransferase of Desulfatibacillum aliphaticivorans.